Consider the following 215-residue polypeptide: Phosphatidylserine decarboxylase proenzyme (215 aa).

The active-site Schiff-base intermediate with substrate; via pyruvic acid is the S184. Residue S184 is modified to Pyruvic acid (Ser); by autocatalysis.

Belongs to the phosphatidylserine decarboxylase family. PSD-A subfamily. As to quaternary structure, heterodimer of a large membrane-associated beta subunit and a small pyruvoyl-containing alpha subunit. It depends on pyruvate as a cofactor. In terms of processing, is synthesized initially as an inactive proenzyme. Formation of the active enzyme involves a self-maturation process in which the active site pyruvoyl group is generated from an internal serine residue via an autocatalytic post-translational modification. Two non-identical subunits are generated from the proenzyme in this reaction, and the pyruvate is formed at the N-terminus of the alpha chain, which is derived from the carboxyl end of the proenzyme. The post-translation cleavage follows an unusual pathway, termed non-hydrolytic serinolysis, in which the side chain hydroxyl group of the serine supplies its oxygen atom to form the C-terminus of the beta chain, while the remainder of the serine residue undergoes an oxidative deamination to produce ammonia and the pyruvoyl prosthetic group on the alpha chain.

The protein localises to the cell membrane. It carries out the reaction a 1,2-diacyl-sn-glycero-3-phospho-L-serine + H(+) = a 1,2-diacyl-sn-glycero-3-phosphoethanolamine + CO2. The protein operates within phospholipid metabolism; phosphatidylethanolamine biosynthesis; phosphatidylethanolamine from CDP-diacylglycerol: step 2/2. In terms of biological role, catalyzes the formation of phosphatidylethanolamine (PtdEtn) from phosphatidylserine (PtdSer). The chain is Phosphatidylserine decarboxylase proenzyme from Aromatoleum aromaticum (strain DSM 19018 / LMG 30748 / EbN1) (Azoarcus sp. (strain EbN1)).